Reading from the N-terminus, the 154-residue chain is MGPHLLGRSSLLLLLLGMWWSVRPLCAVPKGLTKARWFEIQHIQPRLLQCNKAMSGVNNYTQHCKPENTFLHNVFQDVTAVCDMPNIICKNGRHNCHQSPKPVNLTQCNFIAGRYPDCRYHDDAQYKFFIVACDPPQKTDPPYHLVPVHLDKVV.

Positions 1–27 (MGPHLLGRSSLLLLLLGMWWSVRPLCA) are cleaved as a signal peptide. The active-site Proton acceptor is H42. Disulfide bonds link C50–C108, C64–C118, C82–C133, and C89–C96. N-linked (GlcNAc...) asparagine glycosylation occurs at N59. Substrate is bound by residues 65–69 (KPENT) and K90. N104 carries N-linked (GlcNAc...) asparagine glycosylation. Residue H149 is the Proton donor of the active site.

Belongs to the pancreatic ribonuclease family. As to quaternary structure, interacts (via N-terminus) with bacterial lipopolysaccharide (LPS). In terms of tissue distribution, kidney (at protein level).

The protein localises to the secreted. It localises to the lysosome. It is found in the cytoplasmic granule. Ribonuclease which shows a preference for the pyrimidines uridine and cytosine. Has potent antimicrobial activity against a range of Gram-positive and Gram-negative bacteria, including P.aeruginosa, A.baumanii, M.luteus, S.aureus, E.faecalis, E.faecium, S.saprophyticus and E.coli. Causes loss of bacterial membrane integrity, and also promotes agglutination of Gram-negative bacteria. Probably contributes to urinary tract sterility. Bactericidal activity is independent of RNase activity. The protein is Ribonuclease K6 (RNASE6) of Bos taurus (Bovine).